A 204-amino-acid polypeptide reads, in one-letter code: Thymidylate kinase (204 aa).

11-18 is a binding site for ATP; sequence GLDKSGKT.

Belongs to the thymidylate kinase family.

The enzyme catalyses dTMP + ATP = dTDP + ADP. The protein operates within pyrimidine metabolism; dTTP biosynthesis. The chain is Thymidylate kinase (TMK) from Rabbitpox virus (strain Utrecht) (RPV).